Reading from the N-terminus, the 393-residue chain is Protein phosphatase 2C homolog 4 (393 aa).

The PPM-type phosphatase domain maps to 33–368 (YNCVGSMQGY…DNMTAIIVVL (336 aa)). Mn(2+) is bound by residues D83, G84, D310, and D359.

It belongs to the PP2C family. Requires Mg(2+) as cofactor. It depends on Mn(2+) as a cofactor.

The catalysed reaction is O-phospho-L-seryl-[protein] + H2O = L-seryl-[protein] + phosphate. It carries out the reaction O-phospho-L-threonyl-[protein] + H2O = L-threonyl-[protein] + phosphate. The polypeptide is Protein phosphatase 2C homolog 4 (PTC4) (Saccharomyces cerevisiae (strain ATCC 204508 / S288c) (Baker's yeast)).